Here is a 1162-residue protein sequence, read N- to C-terminus: Leptin receptor (1162 aa).

Residues 1–21 form the signal peptide; the sequence is MTCQKFYVVLLHWEFLYVITA. At 22–839 the chain is on the extracellular side; sequence LNLAYPTSPW…DIAKQQNDAG (818 aa). 5 cysteine pairs are disulfide-bonded: Cys37/Cys90, Cys89/Cys99, Cys131/Cys142, Cys186/Cys195, and Cys188/Cys193. N-linked (GlcNAc...) asparagine glycans are attached at residues Asn55, Asn56, Asn73, and Asn98. Asn187 is a glycosylation site (N-linked (GlcNAc...) asparagine). The 94-residue stretch at 238 to 331 folds into the Fibronectin type-III 1 domain; that stretch reads PPLGLRMEVT…LPQLFTTQDV (94 aa). 3 N-linked (GlcNAc...) asparagine glycosylation sites follow: Asn275, Asn345, and Asn356. 2 disulfide bridges follow: Cys350–Cys410 and Cys411–Cys416. Asn431 carries an N-linked (GlcNAc...) asparagine glycan. Intrachain disulfides connect Cys434–Cys445, Cys471–Cys526, and Cys486–Cys496. Positions 465 to 482 are leptin-binding; sequence HRRSLYCPDNPSIRPTSE. N-linked (GlcNAc...) asparagine glycans are attached at residues Asn514, Asn622, Asn657, Asn668, Asn686, Asn695, Asn698, and Asn726. Fibronectin type-III domains lie at 537–632, 637–729, and 738–831; these read PPSN…TLVM, PMRG…NLTF, and AVQS…KDDI. A WSXWS motif motif is present at residues 620 to 624; that stretch reads WSNWS. Residues 840–860 traverse the membrane as a helical segment; sequence LYVIVPIIISSCVLLLGTLLI. Over 861 to 1162 the chain is Cytoplasmic; the sequence is SHQRMKKLFW…IENKMCDLTV (302 aa). The Box 1 motif motif lies at 869-877; the sequence is FWDDVPNPK. Ser880 carries the post-translational modification Phosphoserine. The interval 891–896 is required for JAK2 activation; that stretch reads ETFEHL. Residues 896–904 form a required for STAT3 phosphorylation region; the sequence is LFTKHAESV. At Tyr985 the chain carries Phosphotyrosine; by JAK2. Tyr1077 is modified (phosphotyrosine). Position 1138 is a phosphotyrosine; by JAK2 (Tyr1138).

This sequence belongs to the type I cytokine receptor family. Type 2 subfamily. In terms of assembly, present as a mixture of monomers and dimers. The phosphorylated receptor binds a number of SH2 domain-containing proteins such as JAK2, STAT3, PTPN11, and SOCS3. Interaction with SOCS3 inhibits JAK/STAT signaling and MAPK cascade. Post-translationally, on ligand binding, phosphorylated on two conserved C-terminal tyrosine residues (isoform B only) by JAK2. Tyr-985 is required for complete binding and activation of PTPN11, ERK/FOS activation,for interaction with SOCS3 and SOCS3 mediated inhibition of leptin signaling. Phosphorylation on Tyr-1138 is required for STAT3 binding/activation. Phosphorylation of Tyr-1077 has a more accessory role. Isoform B is expressed in kidney, liver, lung, ovary, spleen and uterus. Increased level in uterus during gestation. Isoform A and isoform C are predominantly expressed in cerebral microvessels and choroid plexus, with lower levels in cortex, cerebellum and hypothalamus but also liver and lung. Isoform F is expressed at high levels in brain, liver and spleen and less in stomach, kidney, thymus, heart, lung and hypothalamus.

Its subcellular location is the cell membrane. The protein resides in the basolateral cell membrane. The protein localises to the secreted. Its function is as follows. Receptor for hormone LEP/leptin. On ligand binding, mediates LEP central and peripheral effects through the activation of different signaling pathways such as JAK2/STAT3 and MAPK cascade/FOS. In the hypothalamus, LEP acts as an appetite-regulating factor that induces a decrease in food intake and an increase in energy consumption by inducing anorexinogenic factors and suppressing orexigenic neuropeptides, also regulates bone mass and secretion of hypothalamo-pituitary-adrenal hormones. In the periphery, increases basal metabolism, influences reproductive function, regulates pancreatic beta-cell function and insulin secretion, is pro-angiogenic and affects innate and adaptive immunity. Control of energy homeostasis and melanocortin production (stimulation of POMC and full repression of AgRP transcription) is mediated by STAT3 signaling, whereas distinct signals regulate NPY and the control of fertility, growth and glucose homeostasis. Involved in the regulation of counter-regulatory response to hypoglycemia by inhibiting neurons of the parabrachial nucleus. Has a specific effect on T lymphocyte responses, differentially regulating the proliferation of naive and memory T-cells. Leptin increases Th1 and suppresses Th2 cytokine production. May transport LEP across the blood-brain barrier. Binds LEP and mediates LEP endocytosis. Does not induce phosphorylation of and activate STAT3. Functionally, antagonizes Isoform A and isoform B-mediated LEP binding and endocytosis. The sequence is that of Leptin receptor (Lepr) from Rattus norvegicus (Rat).